Reading from the N-terminus, the 161-residue chain is 2-C-methyl-D-erythritol 2,4-cyclodiphosphate synthase (161 aa).

A divalent metal cation-binding residues include Asp10 and His12. Residues 10–12 (DVH) and 36–37 (HS) each bind 4-CDP-2-C-methyl-D-erythritol 2-phosphate. His44 lines the a divalent metal cation pocket. 4-CDP-2-C-methyl-D-erythritol 2-phosphate is bound by residues 58-60 (DIG), 63-67 (FPDTD), 102-108 (AQAPKMA), 134-137 (TTTE), Phe141, and Arg144.

Belongs to the IspF family. As to quaternary structure, homotrimer. The cofactor is a divalent metal cation.

The catalysed reaction is 4-CDP-2-C-methyl-D-erythritol 2-phosphate = 2-C-methyl-D-erythritol 2,4-cyclic diphosphate + CMP. Its pathway is isoprenoid biosynthesis; isopentenyl diphosphate biosynthesis via DXP pathway; isopentenyl diphosphate from 1-deoxy-D-xylulose 5-phosphate: step 4/6. Its function is as follows. Involved in the biosynthesis of isopentenyl diphosphate (IPP) and dimethylallyl diphosphate (DMAPP), two major building blocks of isoprenoid compounds. Catalyzes the conversion of 4-diphosphocytidyl-2-C-methyl-D-erythritol 2-phosphate (CDP-ME2P) to 2-C-methyl-D-erythritol 2,4-cyclodiphosphate (ME-CPP) with a corresponding release of cytidine 5-monophosphate (CMP). This is 2-C-methyl-D-erythritol 2,4-cyclodiphosphate synthase from Shewanella sediminis (strain HAW-EB3).